Here is a 257-residue protein sequence, read N- to C-terminus: MSDALIRLEQVGVSFAGEAVLDSIDLAVAPGQIVTLIGPNGAGKTTLVRAVLGLLKPHRGKVWRKPKLRIGYMPQKIQVDATLPLSVLRFLRLVPGVDRAAALSALQEVGAEQVIDSPIQTISGGEMQRVLLARALLREPELLVLDEPVQGVDVVGQTELYNLITRLRDRHGCGVLMVSHDLHLVMSATDQVVCLNRHVCCSGHPEQVSNDPAFVELFGQNAKSLAVYHHHHDHSHDLHGSVIAPGAHVHGEHCKHG.

Residues 6 to 221 (IRLEQVGVSF…PAFVELFGQN (216 aa)) enclose the ABC transporter domain. Residue 38 to 45 (GPNGAGKT) participates in ATP binding.

It belongs to the ABC transporter superfamily. Zinc importer (TC 3.A.1.15.5) family. The complex is composed of two ATP-binding proteins (ZnuC), two transmembrane proteins (ZnuB) and a solute-binding protein (ZnuA).

It localises to the cell inner membrane. The catalysed reaction is Zn(2+)(out) + ATP(in) + H2O(in) = Zn(2+)(in) + ADP(in) + phosphate(in) + H(+)(in). Part of the ABC transporter complex ZnuABC involved in zinc import. Responsible for energy coupling to the transport system. The sequence is that of Zinc import ATP-binding protein ZnuC from Pseudomonas entomophila (strain L48).